Reading from the N-terminus, the 110-residue chain is MTSVQNSPRLQQPQEQQQQQQQLSLKIKQLKLKRINELNNKLRKELSRERITASNACLTIINYTSNTKDYTLPELWGYPVAGSNHFIEGLKNAQKNSQMSNSNSVCCTLM.

Residue C106 is the site of S-palmitoyl cysteine attachment. Position 107 is a cysteine methyl ester (C107). The S-farnesyl cysteine moiety is linked to residue C107. The propeptide at 108–110 (TLM) is removed in mature form.

This sequence belongs to the G protein gamma family. As to quaternary structure, g proteins are composed of 3 units, alpha, beta and gamma. The beta-gamma subunit complex (STE4-STE18 complex) interacts with PLP1 and PLP2.

The protein localises to the membrane. In terms of biological role, implicated in the pheromone A- and alpha-factor response pathway. The beta and gamma chains of the putative yeast mating response pathway G protein play a positive role in initiation of the mating response. The chain is Guanine nucleotide-binding protein subunit gamma (STE18) from Saccharomyces cerevisiae (strain ATCC 204508 / S288c) (Baker's yeast).